Reading from the N-terminus, the 157-residue chain is Probable succinate transporter subunit YjjB (157 aa).

4 helical membrane-spanning segments follow: residues 2 to 22 (GIIS…IPAV), 55 to 75 (AGFN…SIGI), 87 to 107 (IFTV…TAMI), and 129 to 149 (FLKA…PGLW).

This sequence belongs to the ThrE exporter (TC 2.A.79) family. As to quaternary structure, the transporter is composed of YjjB and YjjP.

Its subcellular location is the cell inner membrane. Involved in succinate export with YjjP. Both proteins are required for export. The polypeptide is Probable succinate transporter subunit YjjB (Klebsiella pneumoniae (strain 342)).